The primary structure comprises 565 residues: Periplasmic trehalase (565 aa).

The signal sequence occupies residues 1-30; that stretch reads MKSPAPSRPQKMALIPACIFLCFAALSVQA. Substrate is bound by residues R152, 159 to 160, N196, 205 to 207, 277 to 279, and G310; these read WD, RSQ, and RPE. Catalysis depends on proton donor/acceptor residues D312 and E496. E511 contributes to the substrate binding site. Positions 538–565 are disordered; sequence PCDNVPATRPTVKSATTQPSTKEAQPTP. The span at 548–565 shows a compositional bias: polar residues; sequence TVKSATTQPSTKEAQPTP.

The protein belongs to the glycosyl hydrolase 37 family. Monomer.

The protein resides in the periplasm. The enzyme catalyses alpha,alpha-trehalose + H2O = alpha-D-glucose + beta-D-glucose. Functionally, provides the cells with the ability to utilize trehalose at high osmolarity by splitting it into glucose molecules that can subsequently be taken up by the phosphotransferase-mediated uptake system. The polypeptide is Periplasmic trehalase (Escherichia coli O8 (strain IAI1)).